The primary structure comprises 560 residues: 2-hydroxyacyl-CoA lyase (560 aa).

A thiamine diphosphate-binding site is contributed by Glu-49. Mg(2+)-binding residues include Asp-446 and Asn-473. The short motif at 558–560 (PRL) is the Peroxisomal target signal 1 (PTS1) element.

The protein belongs to the TPP enzyme family. Requires Mg(2+) as cofactor. Thiamine diphosphate serves as cofactor.

It localises to the cytoplasm. The protein resides in the peroxisome matrix. The catalysed reaction is an (R)-2-hydroxy-long-chain-fatty acyl-CoA = a long-chain fatty aldehyde + formyl-CoA. It catalyses the reaction a 2-hydroxy-3-methyl fatty acyl-CoA = a 2-methyl-branched fatty aldehyde + formyl-CoA. Functionally, catalyzes a carbon-carbon cleavage reaction; cleaves a 2-hydroxy-3-methylacyl-CoA into formyl-CoA and a 2-methyl-branched fatty aldehyde. This Saccharomyces cerevisiae (strain ATCC 204508 / S288c) (Baker's yeast) protein is 2-hydroxyacyl-CoA lyase.